Reading from the N-terminus, the 367-residue chain is 4-hydroxy-3-methylbut-2-en-1-yl diphosphate synthase (flavodoxin) (367 aa).

The [4Fe-4S] cluster site is built by Cys-270, Cys-273, Cys-305, and Glu-312.

The protein belongs to the IspG family. Requires [4Fe-4S] cluster as cofactor.

The enzyme catalyses (2E)-4-hydroxy-3-methylbut-2-enyl diphosphate + oxidized [flavodoxin] + H2O + 2 H(+) = 2-C-methyl-D-erythritol 2,4-cyclic diphosphate + reduced [flavodoxin]. It participates in isoprenoid biosynthesis; isopentenyl diphosphate biosynthesis via DXP pathway; isopentenyl diphosphate from 1-deoxy-D-xylulose 5-phosphate: step 5/6. Converts 2C-methyl-D-erythritol 2,4-cyclodiphosphate (ME-2,4cPP) into 1-hydroxy-2-methyl-2-(E)-butenyl 4-diphosphate. This Pasteurella multocida (strain Pm70) protein is 4-hydroxy-3-methylbut-2-en-1-yl diphosphate synthase (flavodoxin).